The sequence spans 239 residues: Large ribosomal subunit protein uL3 (239 aa).

2 disordered regions span residues 140-164 (SHRSIGSTGGRQDPGKTWKNKKMPG) and 211-239 (PLPKEAPKPGKFKVAGEQAAEAPAMQEGA). Q151 bears the N5-methylglutamine mark.

Belongs to the universal ribosomal protein uL3 family. Part of the 50S ribosomal subunit. Forms a cluster with proteins L14 and L19. Post-translationally, methylated by PrmB.

In terms of biological role, one of the primary rRNA binding proteins, it binds directly near the 3'-end of the 23S rRNA, where it nucleates assembly of the 50S subunit. This is Large ribosomal subunit protein uL3 from Bradyrhizobium sp. (strain ORS 278).